The primary structure comprises 468 residues: ATP synthase subunit beta (468 aa).

156–163 (GGAGVGKT) provides a ligand contact to ATP.

The protein belongs to the ATPase alpha/beta chains family. F-type ATPases have 2 components, CF(1) - the catalytic core - and CF(0) - the membrane proton channel. CF(1) has five subunits: alpha(3), beta(3), gamma(1), delta(1), epsilon(1). CF(0) has three main subunits: a(1), b(2) and c(9-12). The alpha and beta chains form an alternating ring which encloses part of the gamma chain. CF(1) is attached to CF(0) by a central stalk formed by the gamma and epsilon chains, while a peripheral stalk is formed by the delta and b chains.

The protein resides in the cell inner membrane. The catalysed reaction is ATP + H2O + 4 H(+)(in) = ADP + phosphate + 5 H(+)(out). Its function is as follows. Produces ATP from ADP in the presence of a proton gradient across the membrane. The catalytic sites are hosted primarily by the beta subunits. The polypeptide is ATP synthase subunit beta (Sulfurimonas denitrificans (strain ATCC 33889 / DSM 1251) (Thiomicrospira denitrificans (strain ATCC 33889 / DSM 1251))).